We begin with the raw amino-acid sequence, 225 residues long: Ribosomal RNA small subunit methyltransferase G (225 aa).

S-adenosyl-L-methionine is bound by residues Gly-71, Leu-76, 121 to 122, and Arg-139; that span reads AE. The segment at 204–225 is disordered; sequence VVEARRATPSNGRGRPGRSSRR.

This sequence belongs to the methyltransferase superfamily. RNA methyltransferase RsmG family.

It is found in the cytoplasm. In terms of biological role, specifically methylates the N7 position of guanine in position 518 of 16S rRNA. The protein is Ribosomal RNA small subunit methyltransferase G of Mycobacterium sp. (strain JLS).